The following is a 553-amino-acid chain: Putative transport protein KPN78578_40470 (553 aa).

5 helical membrane passes run 4 to 24 (IALT…IGNV), 28 to 48 (GVGF…HFVD), 65 to 85 (FGLI…FFAS), 95 to 115 (LFAI…HKLF), and 158 to 178 (MSYA…MWLV). RCK C-terminal domains follow at residues 192-276 (RFEE…VIGQ) and 279-361 (ATSL…ELGN). 6 helical membrane-spanning segments follow: residues 371-391 (MLPV…PLFI), 403-425 (AGGP…LYWF), 437-457 (LGIV…FVAT), 464-484 (LSWI…VGVL), 493-513 (YLTL…LAFA), and 532-552 (PLVM…FWGL).

The protein belongs to the AAE transporter (TC 2.A.81) family. YidE subfamily.

Its subcellular location is the cell membrane. The chain is Putative transport protein KPN78578_40470 from Klebsiella pneumoniae subsp. pneumoniae (strain ATCC 700721 / MGH 78578).